The sequence spans 292 residues: MGNQLDRITHLNYSELPTGDPSGIEKDELRVGVAYFFSDEEEDLDERGQPDKFGVKGPPGCSPCPESPSRHHHHLLHQLVLNETQFSAFRGQECIFSKVTGGPQGADLSVYAVTALPAICEPGDLLELLWLQPATEQPAPAPHWAVYVGGGQVIHLHQGEIRQDSLYQAGAANVGRVVNSWYRYRPLVAELVVQNACGHLGLKSEEICWTNSESFAAWCRFGKREFKAGGEVPAGTQPPQQQYYLKVHLEENKVHTARFHSLEDLIREKRRIDASGRLRVLQELEDFVDDKE.

Serine 38 bears the Phosphoserine mark. Positions 133–228 (PATEQPAPAP…CRFGKREFKA (96 aa)) constitute an LRAT domain.

This sequence belongs to the LRATD family.

It is found in the cytoplasm. May play a role in cell morphology and motility. In Mus musculus (Mouse), this protein is Protein LRATD1.